The following is a 1475-amino-acid chain: Mediator of RNA polymerase II transcription subunit 1.1 (1475 aa).

Disordered stretches follow at residues serine 579–methionine 600, glycine 645–glutamate 894, and proline 908–glutamate 1475. A compositionally biased stretch (low complexity) spans proline 655–proline 666. Over residues glutamine 755 to proline 766 the composition is skewed to polar residues. A compositionally biased stretch (low complexity) spans histidine 767–serine 800. Acidic residues predominate over residues threonine 810–aspartate 819. Positions serine 829–proline 838 are enriched in low complexity. Positions threonine 869 to phenylalanine 880 are enriched in pro residues. Residues glutamine 915 to serine 929 show a composition bias toward low complexity. The segment covering proline 941–proline 952 has biased composition (pro residues). 2 stretches are compositionally biased toward low complexity: residues glutamine 969 to alanine 989 and glutamine 1037 to serine 1049. 3 stretches are compositionally biased toward basic and acidic residues: residues proline 1052–isoleucine 1070, valine 1080–proline 1148, and glutamate 1155–serine 1180. Residues aspartate 1098–aspartate 1135 are a coiled coil. A compositionally biased stretch (polar residues) spans lysine 1181–leucine 1193. Positions proline 1199–alanine 1215 are enriched in basic and acidic residues. Low complexity predominate over residues alanine 1242–glutamine 1252. A compositionally biased stretch (pro residues) spans proline 1281–threonine 1291. Residues proline 1308 to arginine 1317 are compositionally biased toward polar residues. Pro residues-rich tracts occupy residues proline 1320–aspartate 1334 and proline 1425–proline 1440.

The protein belongs to the Mediator complex subunit 1 family. As to quaternary structure, component of the Mediator complex.

It localises to the nucleus. Component of the Mediator complex, a coactivator involved in the regulated transcription of nearly all RNA polymerase II-dependent genes. Mediator functions as a bridge to convey information from gene-specific regulatory proteins to the basal RNA polymerase II transcription machinery. Mediator is recruited to promoters by direct interactions with regulatory proteins and serves as a scaffold for the assembly of a functional preinitiation complex with RNA polymerase II and the general transcription factors. The polypeptide is Mediator of RNA polymerase II transcription subunit 1.1 (sop-3) (Caenorhabditis elegans).